The chain runs to 372 residues: GPN-loop GTPase 1 (372 aa).

Ala2 carries the post-translational modification N-acetylalanine. 29–34 (GSGKTT) is a binding site for GTP. The Gly-Pro-Asn (GPN)-loop; involved in dimer interface signature appears at 86 to 88 (GPN). 189 to 192 (NKTD) is a GTP binding site. A phosphoserine mark is found at Ser301 and Ser314. The tract at residues 303–372 (ALDPEAGKGN…ESMAHWKRNK (70 aa)) is disordered. The residue at position 328 (Thr328) is a Phosphothreonine. The span at 330–342 (DEEDEEADSDTDD) shows a compositional bias: acidic residues. Phosphoserine is present on Ser338. A Phosphothreonine modification is found at Thr340. Residues 343–355 (IDHRVTEESREEP) show a composition bias toward basic and acidic residues.

The protein belongs to the GPN-loop GTPase family. In terms of assembly, heterodimer with GPN3. Binds to RNA polymerase II (RNAPII). Interacts directly with RNAPII subunits RPB4 and RPB7 and the CTD of RPB1. Interacts with XPA.

The protein resides in the cytoplasm. Its subcellular location is the nucleus. In terms of biological role, small GTPase required for proper nuclear import of RNA polymerase II (RNAPII). May act at an RNAP assembly step prior to nuclear import. Forms an interface between the RNA polymerase II enzyme and chaperone/scaffolding proteins, suggesting that it is required to connect RNA polymerase II to regulators of protein complex formation. May be involved in nuclear localization of XPA. The protein is GPN-loop GTPase 1 of Mus musculus (Mouse).